The primary structure comprises 237 residues: Carboxy-S-adenosyl-L-methionine synthase (237 aa).

Residues Tyr36, 61 to 63, 86 to 87, 112 to 113, Asn127, and Arg194 contribute to the S-adenosyl-L-methionine site; these read GAS, DN, and DI.

This sequence belongs to the class I-like SAM-binding methyltransferase superfamily. Cx-SAM synthase family. Homodimer.

It catalyses the reaction prephenate + S-adenosyl-L-methionine = carboxy-S-adenosyl-L-methionine + 3-phenylpyruvate + H2O. Functionally, catalyzes the conversion of S-adenosyl-L-methionine (SAM) to carboxy-S-adenosyl-L-methionine (Cx-SAM). The chain is Carboxy-S-adenosyl-L-methionine synthase from Ruthia magnifica subsp. Calyptogena magnifica.